A 745-amino-acid polypeptide reads, in one-letter code: Cytoplasmic polyadenylation element-binding protein 3 (745 aa).

Disordered regions lie at residues 1-45 (MNLN…KSPT), 94-180 (VGSK…TNNS), and 204-283 (NKAN…FGEL). Over residues 162-175 (LNFERDAEQKKDST) the composition is skewed to basic and acidic residues. The span at 219–229 (ETPTDSPQKGF) shows a compositional bias: polar residues. Positions 230–240 (SSSTESSPSDS) are enriched in low complexity. Positions 241-255 (MNQFPSREHFTSANE) are enriched in polar residues. A compositionally biased stretch (basic and acidic residues) spans 264 to 276 (FQQEHGNKNRDSD). Residues 297–319 (IFVGGVPWDITEAALKDSFGEFG) form the RRM domain.

Its function is as follows. Cytoplasmic polyadenylation element binding protein that binds to and regulates the translation of specific mRNAs. May not be required for oogenesis. The protein is Cytoplasmic polyadenylation element-binding protein 3 (cpb-3) of Caenorhabditis elegans.